The sequence spans 1738 residues: Sodium leak channel NALCN (1738 aa).

The Cytoplasmic segment spans residues 1 to 36 (MLKRKQSSRVEAQPVTDFGPDESLSDNADILWINKP). The chain crosses the membrane as a helical span at residues 37-57 (WVHSLLRICAIISVIPVCMNT). Residues 58–65 (PMTFEHYP) are Extracellular-facing. The chain crosses the membrane as a helical span at residues 66–90 (PLQYVTFTLDTLLMFLYTAEMIAKM). Residues 91–106 (HIRGIVKGDSSYVKDR) lie on the Cytoplasmic side of the membrane. Residues 107 to 129 (WCVFDGFMVFCLWVSLVLQVFEI) form a helical membrane-spanning segment. At 130-137 (ADIVDQMS) the chain is on the extracellular side. Residues 138 to 158 (PWGMLRIPRPLIMIRAFRIYF) form a helical; Voltage-sensor membrane-spanning segment. The Cytoplasmic portion of the chain corresponds to 159–173 (RFELPRTRITNILKR). The chain crosses the membrane as a helical span at residues 174–199 (SGEQIWSVSIFLLFFLLLYGILGVQM). Residues 200 to 269 (FGTFTYHCVV…YSGFNEIGTS (70 aa)) lie on the Extracellular side of the membrane. Intrachain disulfides connect Cys207-Cys239 and Cys229-Cys245. N-linked (GlcNAc...) asparagine glycans are attached at residues Asn210 and Asn216. Positions 270 to 289 (IFTVYEASSQEGWVFLMYRA) form an intramembrane region, pore-forming. At 290 to 294 (IDSFP) the chain is on the extracellular side. A helical membrane pass occupies residues 295–322 (RWRSYFYFITLIFFLAWLVKNVFIAVII). The Cytoplasmic segment spans residues 323–382 (ETFAEIRVQFQQMWGTRSSTTSTATTQMFHEDAAGGWQLVAVDVNKPQGRAPACLQKMMR). The chain crosses the membrane as a helical span at residues 383 to 403 (SSVFHMFILSMVTVDVIVAAS). The Extracellular portion of the chain corresponds to 404–416 (NYYKGENFRRQYD). A helical membrane pass occupies residues 417 to 439 (EFYLAEVAFTVLFDLEALLKIWC). The Cytoplasmic segment spans residues 440 to 447 (LGFTGYIS). The chain crosses the membrane as a helical span at residues 448 to 468 (SSLHKFELLLVIGTTLHVYPD). Residues 469–472 (LYHS) are Extracellular-facing. Residues 473–492 (QFTYFQVLRVVRLIKISPAL) traverse the membrane as a helical; Voltage-sensor segment. Residues 493 to 502 (EDFVYKIFGP) are Cytoplasmic-facing. Residues 503–530 (GKKLGSLVVFTASLLIVMSAISLQMFCF) traverse the membrane as a helical segment. Residues 531 to 543 (VEELDRFTTFPRA) lie on the Extracellular side of the membrane. Positions 544–563 (FMSMFQILTQEGWVDVMDQT) form an intramembrane region, pore-forming. The Extracellular portion of the chain corresponds to 564-569 (LNAVGH). Residues 570 to 599 (MWAPLVAIYFILYHLFATLILLSLFVAVIL) form a helical membrane-spanning segment. Topologically, residues 600–886 (DNLELDEDLK…QLYDLLGLVT (287 aa)) are cytoplasmic. The interval 762–789 (QERRSLRHGSNSQRISRGKSLETLTQDH) is disordered. Residues 795 to 830 (YRNAQREDSEIKMIQEKKEQAEMKRKVQEEELRENH) are a coiled coil. The chain crosses the membrane as a helical span at residues 887–906 (YLDWVMITVTICSCISMMFE). The Extracellular portion of the chain corresponds to 907 to 915 (SPFRRVMHA). The chain crosses the membrane as a helical span at residues 916 to 939 (PTLQIAEYVFVIFMSIELNLKIMA). The Cytoplasmic portion of the chain corresponds to 940 to 947 (DGLFFTPT). A helical transmembrane segment spans residues 948–972 (AVIRDFGGVMDIFIYLVSLIFLCWM). The Extracellular portion of the chain corresponds to 973–980 (PQNVPAES). The helical; Voltage-sensor transmembrane segment at 981–1003 (GAQLLMVLRCLRPLRIFKLVPQM) threads the bilayer. Over 1004–1015 (RKVVRELFSGFK) the chain is Cytoplasmic. Residues 1016–1039 (EIFLVSILLLTLMLVFASFGVQLF) form a helical membrane-spanning segment. The Extracellular portion of the chain corresponds to 1040–1104 (AGKLAKCNDP…NFNFDNVGNA (65 aa)). Residues Cys1046 and Cys1057 are joined by a disulfide bond. N-linked (GlcNAc...) asparagine glycosylation is present at Asn1064. The pore-forming intramembrane region spans 1105 to 1124 (MLALFEVLSLKGWVEVRDVI). The Extracellular portion of the chain corresponds to 1125-1129 (IHRVG). Residues 1130 to 1159 (PIHGIYIHVFVFLGCMIGLTLFVGVVIANF) traverse the membrane as a helical segment. The Cytoplasmic portion of the chain corresponds to 1160–1210 (NENKGTALLTVDQRRWEDLKSRLKIAQPLHLPPRPDNDGFRAKMYDITQHP). The helical transmembrane segment at 1211 to 1227 (FFKRTIALLVLAQSVLL) threads the bilayer. Topologically, residues 1228–1236 (SVKWDVEDP) are extracellular. Residues 1237–1260 (VTVPLATMSVVFTFIFVLEVTMKI) form a helical membrane-spanning segment. Topologically, residues 1261 to 1271 (IAMSPAGFWQS) are cytoplasmic. Residues 1272 to 1293 (RRNRYDLLVTSLGVVWVVLHFA) form a helical membrane-spanning segment. The Extracellular segment spans residues 1294–1296 (LLN). A helical; Voltage-sensor transmembrane segment spans residues 1297–1318 (AYTYMMGACVIVFRFFSICGKH). Residues 1319 to 1331 (VTLKMLLLTVVVS) are Cytoplasmic-facing. A helical transmembrane segment spans residues 1332-1357 (MYKSFFIIVGMFLLLLCYAFAGVVLF). Over 1358-1378 (GTVKYGENINRHANFSSAGKA) the chain is Extracellular. The pore-forming intramembrane region spans 1379 to 1398 (ITVLFRIVTGEDWNKIMHDC). At 1399–1420 (MVQPPFCTPDEFTYWATDCGNY) the chain is on the extracellular side. Cys1405 and Cys1417 are oxidised to a cystine. Residues 1421–1447 (AGALMYFCSFYVIIAYIMLNLLVAIIV) traverse the membrane as a helical segment. Residues 1448 to 1738 (ENFSLFYSTE…DESGDDLLDI (291 aa)) are Cytoplasmic-facing. The disordered stretch occupies residues 1611–1679 (PPSIETTQPS…WRLPSAPKPI (69 aa)). The span at 1613–1631 (SIETTQPSEDTNANSQDHN) shows a compositional bias: polar residues. The span at 1633-1648 (QPESSSQQQLLSPTLS) shows a compositional bias: low complexity.

It belongs to the NALCN family. In terms of assembly, found in a complex with NALCN, UNC79, UNC80 and NACL1; these auxiliary subunits are indispensable for the function of NALCN channel. Interacts with UNC80; required for the NALCN activation/inhibition by GPCRs in neurons. Found in a complex with NALCN, UNC79 and UNC80; UNC80 bridges NALCN to UNC79. Interacts with CHRM3. Post-translationally, phosphorylated on tyrosine residues. In terms of tissue distribution, predominantly expressed in the brain, moderately in the heart and weakly in the pancreas.

The protein resides in the cell membrane. It catalyses the reaction Na(+)(in) = Na(+)(out). Its activity is regulated as follows. Inhibited by low micromolar concentrations of Gd(3+) and high micromolar concentrations of verapamil. Insensitive to tetrodotoxin (TTX) and potentiated by low external Ca(2+) concentration. Its function is as follows. Voltage-gated ion channel responsible for the resting Na(+) permeability that controls neuronal excitability. NALCN channel functions as a multi-protein complex, which consists at least of NALCN, NALF1, UNC79 and UNC80. NALCN is the voltage-sensing, pore-forming subunit of the NALCN channel complex. NALCN channel complex is constitutively active and conducts monovalent cations but is blocked by physiological concentrations of extracellular divalent cations. In addition to its role in regulating neuronal excitability, is required for normal respiratory rhythm, systemic osmoregulation by controlling the serum sodium concentration and in the regulation of the intestinal pace-making activity in the interstitial cells of Cajal. NALCN channel is also activated by neuropeptides such as neurotensin and substance P (SP) through a SRC family kinases-dependent pathway. In addition, NALCN activity is enhanced/modulated by several GPCRs, such as CHRM3. The sequence is that of Sodium leak channel NALCN (Nalcn) from Rattus norvegicus (Rat).